The primary structure comprises 95 residues: Ferredoxin-like protein FixX (95 aa).

The protein belongs to the bacterial-type ferredoxin family. FixX subfamily.

Could be part of an electron transfer system required for anaerobic carnitine reduction. Could be a 3Fe-4S cluster-containing protein. The protein is Ferredoxin-like protein FixX (fixX) of Salmonella typhimurium (strain LT2 / SGSC1412 / ATCC 700720).